Reading from the N-terminus, the 326-residue chain is Balbiani ring protein 1 (326 aa).

The segment covering 1–33 (PSKSGPRPSKSGPRPSKSGPRPSKSGPRPSKSG) has biased composition (low complexity). The tract at residues 1 to 119 (PSKSGPRPSK…RESPVCDDAM (119 aa)) is disordered. Basic and acidic residues predominate over residues 34-51 (PRPEKCGSAMRKAEAEKC). Positions 93–102 (VTPTPEVPTT) are enriched in low complexity. A compositionally biased stretch (basic and acidic residues) spans 107-119 (SESRESPVCDDAM).

Salivary gland.

It is found in the secreted. Its function is as follows. Used by the larvae to construct a supramolecular structure, the larval tube. The protein is Balbiani ring protein 1 (BR1) of Chironomus pallidivittatus (Midge).